We begin with the raw amino-acid sequence, 567 residues long: Urease subunit alpha (567 aa).

Residues 129-567 (GGIDAHIHFI…LPLTQRYCLF (439 aa)) form the Urease domain. The Ni(2+) site is built by His-134, His-136, and Lys-217. Lys-217 carries the N6-carboxylysine modification. His-219 provides a ligand contact to substrate. Ni(2+) is bound by residues His-246 and His-272. His-320 acts as the Proton donor in catalysis. Asp-360 serves as a coordination point for Ni(2+).

It belongs to the metallo-dependent hydrolases superfamily. Urease alpha subunit family. As to quaternary structure, heterotrimer of UreA (gamma), UreB (beta) and UreC (alpha) subunits. Three heterotrimers associate to form the active enzyme. It depends on Ni cation as a cofactor. Post-translationally, carboxylation allows a single lysine to coordinate two nickel ions.

Its subcellular location is the cytoplasm. It carries out the reaction urea + 2 H2O + H(+) = hydrogencarbonate + 2 NH4(+). It participates in nitrogen metabolism; urea degradation; CO(2) and NH(3) from urea (urease route): step 1/1. The polypeptide is Urease subunit alpha (Psychromonas ingrahamii (strain DSM 17664 / CCUG 51855 / 37)).